Here is a 1231-residue protein sequence, read N- to C-terminus: STE20-like serine/threonine-protein kinase (1231 aa).

At Ser-14 the chain carries Phosphoserine. Residues 34–292 (WETIGELGDG…TSQLLQHPFV (259 aa)) form the Protein kinase domain. ATP-binding positions include 40–48 (LGDGAFGKV) and Lys-63. Asp-155 functions as the Proton acceptor in the catalytic mechanism. Thr-183 is subject to Phosphothreonine. Ser-189 bears the Phosphoserine mark. Residues 309-351 (AEVTEEVEDGKEEDDDEEIENSLPIPTNKRASSDLSIASSEED) form a disordered region. A compositionally biased stretch (acidic residues) spans 312-328 (TEEVEDGKEEDDDEEIE). Residues Ser-330, Ser-340, Ser-341, Ser-344, Ser-347, Ser-348, Ser-354, and Ser-372 each carry the phosphoserine modification. Over residues 337-347 (KRASSDLSIAS) the composition is skewed to polar residues. Residues 405–478 (PDRATELPES…KQPVLENKLV (74 aa)) form a disordered region. 2 stretches are compositionally biased toward basic and acidic residues: residues 407 to 428 (RATE…RLPD) and 446 to 478 (DHAV…NKLV). At Ser-507 the chain carries Phosphoserine. The segment covering 516 to 531 (THEKLRKDDTTQKDVI) has biased composition (basic and acidic residues). The disordered stretch occupies residues 516-757 (THEKLRKDDT…TGSTADNSSI (242 aa)). Residues Ser-536 and Ser-554 each carry the phosphoserine modification. Residues 601 to 613 (TDQKLVENTHEKQ) show a composition bias toward basic and acidic residues. Residues 615 to 624 (PISSETTLDT) show a composition bias toward polar residues. Ser-641 and Ser-661 each carry phosphoserine. The span at 641-660 (STEEVEVEGAVSETDEEDVQ) shows a compositional bias: acidic residues. Over residues 683–692 (EAPAQVEVQV) the composition is skewed to low complexity. Residues 693–706 (PVPPQPSEPPPAPI) show a composition bias toward pro residues. Phosphoserine is present on Ser-775. Thr-810 is subject to Phosphothreonine. Ser-814 bears the Phosphoserine mark. Residues 822-1065 (LRRQELRELR…LKNRQTQERA (244 aa)) adopt a coiled-coil conformation. One can recognise a UVR domain in the interval 871-906 (DQEIENLEKQQKQTIERLEQEHTNRLRDEAKRIKGE). Position 1093 is a phosphothreonine (Thr-1093). A coiled-coil region spans residues 1105-1179 (SAQEEKRQKN…ELKEWREKLR (75 aa)).

Belongs to the protein kinase superfamily. STE Ser/Thr protein kinase family. STE20 subfamily. Proteolytically cleaved by caspase-3. Post-translationally, autophosphorylated. As to expression, ubiquitously expressed.

It localises to the cytoplasm. It catalyses the reaction L-seryl-[protein] + ATP = O-phospho-L-seryl-[protein] + ADP + H(+). The enzyme catalyses L-threonyl-[protein] + ATP = O-phospho-L-threonyl-[protein] + ADP + H(+). Its function is as follows. Mediates apoptosis and actin stress fiber dissolution. The sequence is that of STE20-like serine/threonine-protein kinase (SLK) from Cavia porcellus (Guinea pig).